Reading from the N-terminus, the 272-residue chain is HMP-PP phosphatase (272 aa).

The active-site Nucleophile is the aspartate 8. Mg(2+) contacts are provided by aspartate 8, aspartate 10, and aspartate 212.

This sequence belongs to the HAD-like hydrolase superfamily. Cof family. Mg(2+) serves as cofactor.

The catalysed reaction is 4-amino-2-methyl-5-(diphosphooxymethyl)pyrimidine + H2O = 4-amino-2-methyl-5-(phosphooxymethyl)pyrimidine + phosphate + H(+). Catalyzes the hydrolysis of 4-amino-2-methyl-5-hydroxymethylpyrimidine pyrophosphate (HMP-PP) to 4-amino-2-methyl-5-hydroxymethylpyrimidine phosphate (HMP-P). This chain is HMP-PP phosphatase, found in Escherichia fergusonii (strain ATCC 35469 / DSM 13698 / CCUG 18766 / IAM 14443 / JCM 21226 / LMG 7866 / NBRC 102419 / NCTC 12128 / CDC 0568-73).